Reading from the N-terminus, the 283-residue chain is Phosphatidylserine decarboxylase proenzyme (283 aa).

Catalysis depends on charge relay system; for autoendoproteolytic cleavage activity residues D89, H146, and S249. Residue S249 is the Schiff-base intermediate with substrate; via pyruvic acid; for decarboxylase activity of the active site. S249 bears the Pyruvic acid (Ser); by autocatalysis mark.

Belongs to the phosphatidylserine decarboxylase family. PSD-B subfamily. Prokaryotic type I sub-subfamily. In terms of assembly, heterodimer of a large membrane-associated beta subunit and a small pyruvoyl-containing alpha subunit. Pyruvate is required as a cofactor. In terms of processing, is synthesized initially as an inactive proenzyme. Formation of the active enzyme involves a self-maturation process in which the active site pyruvoyl group is generated from an internal serine residue via an autocatalytic post-translational modification. Two non-identical subunits are generated from the proenzyme in this reaction, and the pyruvate is formed at the N-terminus of the alpha chain, which is derived from the carboxyl end of the proenzyme. The autoendoproteolytic cleavage occurs by a canonical serine protease mechanism, in which the side chain hydroxyl group of the serine supplies its oxygen atom to form the C-terminus of the beta chain, while the remainder of the serine residue undergoes an oxidative deamination to produce ammonia and the pyruvoyl prosthetic group on the alpha chain. During this reaction, the Ser that is part of the protease active site of the proenzyme becomes the pyruvoyl prosthetic group, which constitutes an essential element of the active site of the mature decarboxylase.

It localises to the cell membrane. It carries out the reaction a 1,2-diacyl-sn-glycero-3-phospho-L-serine + H(+) = a 1,2-diacyl-sn-glycero-3-phosphoethanolamine + CO2. Its pathway is phospholipid metabolism; phosphatidylethanolamine biosynthesis; phosphatidylethanolamine from CDP-diacylglycerol: step 2/2. Its function is as follows. Catalyzes the formation of phosphatidylethanolamine (PtdEtn) from phosphatidylserine (PtdSer). The polypeptide is Phosphatidylserine decarboxylase proenzyme (Legionella pneumophila subsp. pneumophila (strain Philadelphia 1 / ATCC 33152 / DSM 7513)).